The sequence spans 227 residues: PKHD-type hydroxylase GDI1238/Gdia_1949 (227 aa).

Residues 78 to 178 (RVVPPLFNRY…RLASFFWTQS (101 aa)) enclose the Fe2OG dioxygenase domain. Residues His-96, Asp-98, and His-159 each coordinate Fe cation. Arg-169 provides a ligand contact to 2-oxoglutarate.

The cofactor is Fe(2+). L-ascorbate is required as a cofactor.

The chain is PKHD-type hydroxylase GDI1238/Gdia_1949 from Gluconacetobacter diazotrophicus (strain ATCC 49037 / DSM 5601 / CCUG 37298 / CIP 103539 / LMG 7603 / PAl5).